The chain runs to 148 residues: UPF0758 protein YeeS (148 aa).

The region spanning 26–148 is the MPN domain; the sequence is AFTSTRAARE…VFSFAEHGLL (123 aa). Zn(2+) contacts are provided by H97, H99, and D110. Positions 97–110 match the JAMM motif motif; that stretch reads HNHPSGEVTPSKAD.

The protein belongs to the UPF0758 family.

This Escherichia coli (strain K12) protein is UPF0758 protein YeeS (yeeS).